Here is a 75-residue protein sequence, read N- to C-terminus: Calhepatin (75 aa).

At serine 1 the chain carries N-acetylserine. 2 consecutive EF-hand domains span residues 2–37 (ADEQ…VHPK) and 38–73 (VSRN…LADL). Aspartate 15, aspartate 17, serine 19, threonine 21, glutamate 26, aspartate 51, asparagine 53, aspartate 55, glutamine 57, and glutamate 62 together coordinate Ca(2+).

As to quaternary structure, monomer and homodimer. As to expression, liver, and to a much lower level intestine.

Its function is as follows. Binds both calcium and copper, but not zinc. May be involved in calcium signal transduction. The polypeptide is Calhepatin (Lepidosiren paradoxus (South American lungfish)).